Here is a 122-residue protein sequence, read N- to C-terminus: Large ribosomal subunit protein uL14 (122 aa).

It belongs to the universal ribosomal protein uL14 family. In terms of assembly, part of the 50S ribosomal subunit. Forms a cluster with proteins L3 and L19. In the 70S ribosome, L14 and L19 interact and together make contacts with the 16S rRNA in bridges B5 and B8.

Functionally, binds to 23S rRNA. Forms part of two intersubunit bridges in the 70S ribosome. The polypeptide is Large ribosomal subunit protein uL14 (Acinetobacter baumannii (strain SDF)).